A 133-amino-acid polypeptide reads, in one-letter code: Profilin (133 aa).

Belongs to the profilin family.

More likely to influence phosphoinositide metabolism than actin assembly. In Camelus, this protein is Profilin.